The chain runs to 483 residues: Alpha-tubulin N-acetyltransferase (483 aa).

The region spanning 1–186 (MEFRFNMHPL…NNFVVYEGFF (186 aa)) is the N-acetyltransferase domain. Residues 120 to 133 (FYVHESRQRGGLGR) and 156 to 165 (SEKLLGFLQK) contribute to the acetyl-CoA site. 3 disordered regions span residues 204–231 (TASPNTNLFGPTFTTTEERRRSTSQTRT), 330–395 (ETLP…VLGS), and 437–472 (SVKINRPIGKSGTRGSLHDDNESVHSNGSQQGGGGH). A compositionally biased stretch (basic and acidic residues) spans 347 to 369 (YDFHPHHLELHDDTEGGGSHRDQ). Positions 370-383 (SLSPQSVSQQASPV) are enriched in low complexity.

Belongs to the acetyltransferase ATAT1 family.

It catalyses the reaction L-lysyl-[alpha-tubulin] + acetyl-CoA = N(6)-acetyl-L-lysyl-[alpha-tubulin] + CoA + H(+). Specifically acetylates 'Lys-40' in alpha-tubulin on the lumenal side of microtubules. Promotes microtubule destabilization and accelerates microtubule dynamics; this activity may be independent of acetylation activity. Acetylates alpha-tubulin with a slow enzymatic rate, due to a catalytic site that is not optimized for acetyl transfer. Enters the microtubule through each end and diffuses quickly throughout the lumen of microtubules. Acetylates only long/old microtubules because of its slow acetylation rate since it does not have time to act on dynamically unstable microtubules before the enzyme is released. The polypeptide is Alpha-tubulin N-acetyltransferase (Anopheles gambiae (African malaria mosquito)).